We begin with the raw amino-acid sequence, 475 residues long: Ribulose bisphosphate carboxylase large chain (475 aa).

A propeptide spanning residues 1-2 (MS) is cleaved from the precursor. An N-acetylproline modification is found at Pro3. Lys14 bears the N6,N6,N6-trimethyllysine mark. The substrate site is built by Asn123 and Thr173. Lys175 (proton acceptor) is an active-site residue. Lys177 serves as a coordination point for substrate. The Mg(2+) site is built by Lys201, Asp203, and Glu204. Lys201 bears the N6-carboxylysine mark. Residue His294 is the Proton acceptor of the active site. 3 residues coordinate substrate: Arg295, His327, and Ser379.

It belongs to the RuBisCO large chain family. Type I subfamily. In terms of assembly, heterohexadecamer of 8 large chains and 8 small chains; disulfide-linked. The disulfide link is formed within the large subunit homodimers. Mg(2+) is required as a cofactor. Post-translationally, the disulfide bond which can form in the large chain dimeric partners within the hexadecamer appears to be associated with oxidative stress and protein turnover.

Its subcellular location is the plastid. The protein resides in the chloroplast. It catalyses the reaction 2 (2R)-3-phosphoglycerate + 2 H(+) = D-ribulose 1,5-bisphosphate + CO2 + H2O. The catalysed reaction is D-ribulose 1,5-bisphosphate + O2 = 2-phosphoglycolate + (2R)-3-phosphoglycerate + 2 H(+). Its function is as follows. RuBisCO catalyzes two reactions: the carboxylation of D-ribulose 1,5-bisphosphate, the primary event in carbon dioxide fixation, as well as the oxidative fragmentation of the pentose substrate in the photorespiration process. Both reactions occur simultaneously and in competition at the same active site. The polypeptide is Ribulose bisphosphate carboxylase large chain (Bouvardia ternifolia (Firecrackerbush)).